Consider the following 382-residue polypeptide: Mannitol-1-phosphate 5-dehydrogenase (382 aa).

Residue 3 to 14 (ALHFGAGNIGRG) participates in NAD(+) binding. N6-acetyllysine is present on Lys269.

Belongs to the mannitol dehydrogenase family.

The catalysed reaction is D-mannitol 1-phosphate + NAD(+) = beta-D-fructose 6-phosphate + NADH + H(+). The sequence is that of Mannitol-1-phosphate 5-dehydrogenase from Shigella boydii serotype 18 (strain CDC 3083-94 / BS512).